A 582-amino-acid polypeptide reads, in one-letter code: Pineapple eye protein (582 aa).

A C2HC pre-PHD-type zinc finger spans residues 6-44; the sequence is ELQCLICKYSDTDDLVFGEWMIVRNLQVHYFCLLLSTHL. The tract at residues 6 to 119 is extended PHD domain (ePHD); that stretch reads ELQCLICKYS…QYKSYCYKCR (114 aa). The PHD-type; atypical zinc finger occupies 72–119; sequence RKCWYCNKIGASLQCDRCRSLFHLKCGLENRAVFEFCGQYKSYCYKCR. Disordered regions lie at residues 292-311 and 323-422; these read PARTTEETNADGDNQVDGSF and RSLT…ASEI. Polar residues predominate over residues 340–363; sequence SSNITVIFSQPKSNATSERLSLSP. A compositionally biased stretch (basic and acidic residues) spans 383 to 399; the sequence is SIDENHSPQPIARRDTS.

Required for survival of imaginal disk cells possibly by regulation of cell apoptosis. Required for germline stem cell self-renewal through mediation of BMP signaling. The protein is Pineapple eye protein of Drosophila melanogaster (Fruit fly).